A 349-amino-acid polypeptide reads, in one-letter code: Twinfilin-2 (349 aa).

Alanine 2 carries the N-acetylalanine modification. 2 consecutive ADF-H domains span residues glutamine 4–serine 139 and glycine 177–histidine 313. N6-acetyllysine is present on lysine 14. At tyrosine 309 the chain carries Phosphotyrosine. Residues alanine 322 to serine 349 are disordered. The span at glycine 330 to isoleucine 339 shows a compositional bias: basic residues. Position 349 is a phosphoserine (serine 349).

It belongs to the actin-binding proteins ADF family. Twinfilin subfamily. Interacts with G-actin; ADP-actin form and capping protein (CP). May also be able to interact with TWF1 and phosphoinositides, PI(4,5)P2. When bound to PI(4,5)P2, it is down-regulated. Interacts with MYO7A. In vitro, phosphorylated by PRKCZ, CK2 and SRC. As to expression, ubiquitously expressed (at protein level).

It is found in the cytoplasm. Its subcellular location is the cytoskeleton. It localises to the perinuclear region. The protein resides in the cell projection. The protein localises to the stereocilium. Its function is as follows. Actin-binding protein involved in motile and morphological processes. Inhibits actin polymerization, likely by sequestering G-actin. By capping the barbed ends of filaments, it also regulates motility. Seems to play an important role in clathrin-mediated endocytosis and distribution of endocytic organelles. May play a role in regulating the mature length of the middle and short rows of stereocilia. This is Twinfilin-2 (TWF2) from Homo sapiens (Human).